The following is a 504-amino-acid chain: Maturase K (504 aa).

It belongs to the intron maturase 2 family. MatK subfamily.

The protein localises to the plastid. It localises to the chloroplast. Usually encoded in the trnK tRNA gene intron. Probably assists in splicing its own and other chloroplast group II introns. This Draba nemorosa (Woodland whitlowgrass) protein is Maturase K.